Here is a 157-residue protein sequence, read N- to C-terminus: Small ribosomal subunit protein bS16 (157 aa).

Residues 125-141 (KRKAAKKAAEEAAAKEA) are compositionally biased toward basic and acidic residues. Residues 125–157 (KRKAAKKAAEEAAAKEAEAEEAAEDKAEEESAE) are disordered. The span at 142–157 (EAEEAAEDKAEEESAE) shows a compositional bias: acidic residues.

The protein belongs to the bacterial ribosomal protein bS16 family.

This chain is Small ribosomal subunit protein bS16, found in Corynebacterium kroppenstedtii (strain DSM 44385 / JCM 11950 / CIP 105744 / CCUG 35717).